Here is a 288-residue protein sequence, read N- to C-terminus: Quinate/shikimate dehydrogenase (288 aa).

Residues Lys71 and Asp107 each contribute to the substrate site. Residues 132 to 135 (AGGA), 155 to 158 (NRRD), Lys205, 232 to 235 (CVYN), and Gly255 contribute to the NAD(+) site.

It belongs to the shikimate dehydrogenase family. As to quaternary structure, homodimer.

The catalysed reaction is L-quinate + NAD(+) = 3-dehydroquinate + NADH + H(+). The enzyme catalyses L-quinate + NADP(+) = 3-dehydroquinate + NADPH + H(+). It carries out the reaction shikimate + NADP(+) = 3-dehydroshikimate + NADPH + H(+). It catalyses the reaction shikimate + NAD(+) = 3-dehydroshikimate + NADH + H(+). Its pathway is metabolic intermediate biosynthesis; chorismate biosynthesis; chorismate from D-erythrose 4-phosphate and phosphoenolpyruvate: step 4/7. Its function is as follows. The actual biological function of YdiB remains unclear, nor is it known whether 3-dehydroshikimate or quinate represents the natural substrate. Catalyzes the reversible NAD-dependent reduction of both 3-dehydroshikimate (DHSA) and 3-dehydroquinate to yield shikimate (SA) and quinate, respectively. It can use both NAD or NADP for catalysis, however it has higher catalytic efficiency with NAD. The protein is Quinate/shikimate dehydrogenase of Escherichia coli O81 (strain ED1a).